Reading from the N-terminus, the 565-residue chain is Maturase K (565 aa).

Belongs to the intron maturase 2 family. MatK subfamily.

The protein localises to the plastid. Its subcellular location is the chloroplast. Functionally, usually encoded in the trnK tRNA gene intron. Probably assists in splicing its own and other chloroplast group II introns. This Staurastrum punctulatum (Green alga) protein is Maturase K.